The sequence spans 426 residues: Alpha-ionylideneethane synthase abl3 (426 aa).

It belongs to the alpha-ionylideneethane synthase family.

It functions in the pathway hormone biosynthesis. In terms of biological role, alpha-ionylideneethane synthase; part of the gene cluster that mediates the biosynthesis of abscisic acid (ABA), a phytohormone that acts antagonistically toward salicylic acid (SA), jasmonic acid (JA) and ethylene (ETH) signaling, to impede plant defense responses. The first step of the pathway catalyzes the reaction from farnesyl diphosphate to alpha-ionylideneethane performed by the alpha-ionylideneethane synthase abl3 via a three-step reaction mechanism involving 2 neutral intermediates, beta-farnesene and allofarnesene. The cytochrome P450 monooxygenase abl1 might then be involved in the conversion of alpha-ionylideneethane to alpha-ionylideneacetic acid. Alpha-ionylideneacetic acid is further converted to abscisic acid in 2 steps involving the cytochrome P450 monooxygenase abl2 and the short-chain dehydrogenase/reductase abl4, via the intermediates 1'-deoxy-ABA or 1',4'-trans-diol-ABA, depending on the order of action of these 2 enzymes. Abl2 is responsible for the hydroxylation of carbon atom C-1' and abl4 might be involved in the oxidation of the C-4' carbon atom. The protein is Alpha-ionylideneethane synthase abl3 of Leptosphaeria maculans (strain JN3 / isolate v23.1.3 / race Av1-4-5-6-7-8) (Blackleg fungus).